A 170-amino-acid polypeptide reads, in one-letter code: Large ribosomal subunit protein uL11 (170 aa).

The protein belongs to the universal ribosomal protein uL11 family. In terms of assembly, part of the ribosomal stalk of the 50S ribosomal subunit. Interacts with L10 and the large rRNA to form the base of the stalk. L10 forms an elongated spine to which L12 dimers bind in a sequential fashion forming a multimeric L10(L12)X complex.

Forms part of the ribosomal stalk which helps the ribosome interact with GTP-bound translation factors. The polypeptide is Large ribosomal subunit protein uL11 (Saccharolobus solfataricus (strain ATCC 35092 / DSM 1617 / JCM 11322 / P2) (Sulfolobus solfataricus)).